Consider the following 480-residue polypeptide: Ribosomal RNA small subunit methyltransferase F (480 aa).

S-adenosyl-L-methionine contacts are provided by residues 125-131 (AAAPGSK), glutamate 149, aspartate 176, and aspartate 194. The Nucleophile role is filled by cysteine 247.

Belongs to the class I-like SAM-binding methyltransferase superfamily. RsmB/NOP family.

The protein resides in the cytoplasm. It catalyses the reaction cytidine(1407) in 16S rRNA + S-adenosyl-L-methionine = 5-methylcytidine(1407) in 16S rRNA + S-adenosyl-L-homocysteine + H(+). In terms of biological role, specifically methylates the cytosine at position 1407 (m5C1407) of 16S rRNA. The polypeptide is Ribosomal RNA small subunit methyltransferase F (Enterobacter sp. (strain 638)).